Reading from the N-terminus, the 1872-residue chain is Ral GTPase-activating protein subunit alpha-2 (1872 aa).

Phosphoserine occurs at positions 373, 376, and 379. A compositionally biased stretch (basic and acidic residues) spans 446-469 (DKKDVAEEDADKLGLSETDSKEVS). Residues 446–481 (DKKDVAEEDADKLGLSETDSKEVSSESSGHKRSSSW) form a disordered region. Phosphoserine occurs at positions 486 and 696. Disordered stretches follow at residues 711–730 (FRSA…NTVR) and 758–849 (QPVP…TGSD). T715 carries the phosphothreonine; by PKB modification. Polar residues predominate over residues 775–795 (SDSSQGQKVENSQNLSSSEPK). The span at 796–810 (SVQESKGHVTHEHEG) shows a compositional bias: basic and acidic residues. A phosphoserine mark is found at S819 and S820. Basic and acidic residues predominate over residues 824–843 (LDLKEESQQTHGRCRERQKS). S1592 carries the phosphoserine modification. The Rap-GAP domain occupies 1634–1842 (LKNLDSRQCR…EERALYLEAI (209 aa)).

As to quaternary structure, component of the heterodimeric RalGAP2 complex with RALGAPB. Heterodimerization is required for activity. As to expression, highly expressed in lung, liver, testis and thymus with lower levels in brain and heart (at protein level).

It localises to the cytoplasm. Functionally, catalytic subunit of the heterodimeric RalGAP2 complex which acts as a GTPase activator for the Ras-like small GTPases RALA and RALB. This chain is Ral GTPase-activating protein subunit alpha-2, found in Rattus norvegicus (Rat).